Reading from the N-terminus, the 132-residue chain is Histone H2A (132 aa).

Residues 1–13 are compositionally biased toward basic residues; the sequence is MSAKGKTGRKKAS. The disordered stretch occupies residues 1 to 21; sequence MSAKGKTGRKKASKGTSNSAK.

Belongs to the histone H2A family. As to quaternary structure, the nucleosome is a histone octamer containing two molecules each of H2A, H2B, H3 and H4 assembled in one H3-H4 heterotetramer and two H2A-H2B heterodimers. The octamer wraps approximately 147 bp of DNA.

It localises to the nucleus. Its subcellular location is the chromosome. In terms of biological role, core component of nucleosome. Nucleosomes wrap and compact DNA into chromatin, limiting DNA accessibility to the cellular machineries which require DNA as a template. Histones thereby play a central role in transcription regulation, DNA repair, DNA replication and chromosomal stability. DNA accessibility is regulated via a complex set of post-translational modifications of histones, also called histone code, and nucleosome remodeling. This is Histone H2A from Plasmodium falciparum.